The sequence spans 382 residues: Galactokinase (382 aa).

34-37 provides a ligand contact to substrate; the sequence is EHTD. Residue 124–130 coordinates ATP; the sequence is GAGLSSS. Mg(2+)-binding residues include Ser130 and Glu162. Asp174 acts as the Proton acceptor in catalysis. Tyr223 is a binding site for substrate.

It belongs to the GHMP kinase family. GalK subfamily.

Its subcellular location is the cytoplasm. The catalysed reaction is alpha-D-galactose + ATP = alpha-D-galactose 1-phosphate + ADP + H(+). It functions in the pathway carbohydrate metabolism; galactose metabolism. In terms of biological role, catalyzes the transfer of the gamma-phosphate of ATP to D-galactose to form alpha-D-galactose-1-phosphate (Gal-1-P). This Erwinia tasmaniensis (strain DSM 17950 / CFBP 7177 / CIP 109463 / NCPPB 4357 / Et1/99) protein is Galactokinase.